The following is a 199-amino-acid chain: Probable cobalt-precorrin-6B C(15)-methyltransferase (decarboxylating) (199 aa).

S-adenosyl-L-methionine contacts are provided by residues threonine 24, glycine 48 to glycine 52, aspartate 72, and alanine 101.

The protein belongs to the methyltransferase superfamily. Archaeal-type CbiT family.

The enzyme catalyses Co-precorrin-6B + S-adenosyl-L-methionine = Co-precorrin-7 + S-adenosyl-L-homocysteine + CO2. It participates in cofactor biosynthesis; adenosylcobalamin biosynthesis; cob(II)yrinate a,c-diamide from sirohydrochlorin (anaerobic route): step 8/10. Catalyzes the methylation of C-15 in cobalt-precorrin-6B followed by the decarboxylation of C-12 to form cobalt-precorrin-7. The sequence is that of Probable cobalt-precorrin-6B C(15)-methyltransferase (decarboxylating) from Saccharolobus islandicus (strain Y.N.15.51 / Yellowstone #2) (Sulfolobus islandicus).